The sequence spans 639 residues: MAPSSLLLSVGSLIASSLASATSLQIREQSQSYQLTESWQGESFINDWNFFDRGDPTNGYVTYVNQSVAESSGLVKVTQSGSFYMGVDYESKLNPDGPGRESVRIESKKYYTQGLYVVDIAHMPGSICGTWPAFWSVGANWPHDGEIDIIEGVNKHDANEIVLHTSGSCDVAGSHDMTGSLTSGECGDASGTIGCVVKGTQGSAGDPFNAQGGGVYAIEWTDSFLKIWFFPRNSIPASITAGKPDSSAFGTPMAHLQGTCDFAERFKEQKFILDTTFCGDWAGNVFGESGCPLSDASSPMRSCVDYVAQNPAAFKEAYWEINSIKIYQLGAAPAPATVASPNTASEVHSASELAPATQTEKPTVPTAAETTVVPPASQTSTVAEETPIAPLATAATVTAVNPAPPATQPTAEPATAVTVTDGGDSFRTIFLTSTTTICPEAQSSSSAAAHGGNKNAPVGAVPGQPSGADAVGNPNPSTTTEAVAETETSQPELTAGGISELPKSAPAPTASQPTSEFKPSDVPDVPKPSPEAEHPAPPAAAGSSIINTPSSSAIFGSSTAVGTFTSLARVSRPTGGATFVPTIATATGSPTVGEDGSSGSATASATLTAPTGILFTAGARKLSVGLSGLVGALAVAALA.

Positions 1 to 21 are cleaved as a signal peptide; that stretch reads MAPSSLLLSVGSLIASSLASA. In terms of domain architecture, GH16 spans 26-290; that stretch reads IREQSQSYQL…WAGNVFGESG (265 aa). A glycan (N-linked (GlcNAc...) asparagine) is linked at asparagine 65. Glutamate 146 (nucleophile) is an active-site residue. The Proton donor role is filled by glutamate 151. Disordered stretches follow at residues 337-384 and 442-545; these read TVAS…TVAE and QSSS…GSSI. The span at 339-348 shows a compositional bias: polar residues; the sequence is ASPNTASEVH. 2 stretches are compositionally biased toward low complexity: residues 362–376 and 478–488; these read PTVP…VPPA and TTTEAVAETET. Alanine 617 carries the GPI-anchor amidated alanine lipid modification. The propeptide at 618–639 is removed in mature form; sequence GARKLSVGLSGLVGALAVAALA.

This sequence belongs to the glycosyl hydrolase 16 family.

The protein resides in the cell membrane. It catalyses the reaction Endohydrolysis of (1-&gt;3)- or (1-&gt;4)-linkages in beta-D-glucans when the glucose residue whose reducing group is involved in the linkage to be hydrolyzed is itself substituted at C-3.. Functionally, mixed-linked glucanase involved in the degradation of complex natural cellulosic substrates. This chain is Probable endo-1,3(4)-beta-glucanase ACLA_073210, found in Aspergillus clavatus (strain ATCC 1007 / CBS 513.65 / DSM 816 / NCTC 3887 / NRRL 1 / QM 1276 / 107).